The following is a 70-amino-acid chain: MKQGIHPEYKEVTATCSCGNVIKTRSTLGKDINLDVCGNCHPFYTGKQRVVDTGGRVERFNSRFKIPSTK.

Zn(2+) contacts are provided by Cys16, Cys18, Cys37, and Cys40.

This sequence belongs to the bacterial ribosomal protein bL31 family. Type A subfamily. Part of the 50S ribosomal subunit. Zn(2+) is required as a cofactor.

Functionally, binds the 23S rRNA. This chain is Large ribosomal subunit protein bL31, found in Haemophilus influenzae (strain 86-028NP).